Consider the following 215-residue polypeptide: Superoxide dismutase [Mn] (215 aa).

Residues His-27, His-83, Asp-170, and His-174 each contribute to the Mn(2+) site.

The protein belongs to the iron/manganese superoxide dismutase family. As to quaternary structure, homodimer. Mn(2+) serves as cofactor.

The enzyme catalyses 2 superoxide + 2 H(+) = H2O2 + O2. Destroys superoxide anion radicals which are normally produced within the cells and which are toxic to biological systems. This is Superoxide dismutase [Mn] (sodA) from Haemophilus influenzae (strain ATCC 51907 / DSM 11121 / KW20 / Rd).